The chain runs to 646 residues: UvrABC system protein B (646 aa).

The Helicase ATP-binding domain maps to 25–412 (NGIKAGMREQ…QNIVEQIIRP (388 aa)). ATP is bound at residue 38 to 45 (GVTGSGKT). The Beta-hairpin signature appears at 91–114 (YYDFYQPEAYIPQTDTYIDKEASI). In terms of domain architecture, Helicase C-terminal spans 428 to 594 (QVDDLLSEIR…STRRTLREEE (167 aa)). The UVR domain occupies 611 to 646 (ELIIKDLEAEMRDAARNLEFERAARIRDRIMSLKSN).

This sequence belongs to the UvrB family. Forms a heterotetramer with UvrA during the search for lesions. Interacts with UvrC in an incision complex.

The protein localises to the cytoplasm. Functionally, the UvrABC repair system catalyzes the recognition and processing of DNA lesions. A damage recognition complex composed of 2 UvrA and 2 UvrB subunits scans DNA for abnormalities. Upon binding of the UvrA(2)B(2) complex to a putative damaged site, the DNA wraps around one UvrB monomer. DNA wrap is dependent on ATP binding by UvrB and probably causes local melting of the DNA helix, facilitating insertion of UvrB beta-hairpin between the DNA strands. Then UvrB probes one DNA strand for the presence of a lesion. If a lesion is found the UvrA subunits dissociate and the UvrB-DNA preincision complex is formed. This complex is subsequently bound by UvrC and the second UvrB is released. If no lesion is found, the DNA wraps around the other UvrB subunit that will check the other stand for damage. This is UvrABC system protein B from Methanothermobacter thermautotrophicus (strain ATCC 29096 / DSM 1053 / JCM 10044 / NBRC 100330 / Delta H) (Methanobacterium thermoautotrophicum).